The primary structure comprises 296 residues: UBX domain-containing protein 1-A (296 aa).

The UBA domain maps to 1-42; that stretch reads MAECSTLESLIEMGFSSTRAEKALTATGNQGIEPAMDWLVEH. The disordered stretch occupies residues 43 to 216; it reads EDDPDIDEPS…VQEPPTKKEY (174 aa). The span at 61–75 shows a compositional bias: low complexity; the sequence is TDTADTTDTTDTTDT. Basic and acidic residues-rich tracts occupy residues 86-100, 107-123, and 138-178; these read PLTE…KRMM, QNER…EQEK, and KMQE…DRAR. A coiled-coil region spans residues 87–177; the sequence is LTEEEKEKQT…KIARDKADRA (91 aa). The span at 191–206 shows a compositional bias: low complexity; sequence PAETSIPATTPSPSSP. Residues 214 to 293 enclose the UBX domain; the sequence is KEYDQCRIQV…GLVPTAVLIV (80 aa).

The protein resides in the cytoplasm. Its function is as follows. Component of a complex required to couple deglycosylation and proteasome-mediated degradation of misfolded proteins in the endoplasmic reticulum that are retrotranslocated in the cytosol. Involved in ubiquitin-proteasome systems. The sequence is that of UBX domain-containing protein 1-A (ubxn1-a) from Xenopus laevis (African clawed frog).